Here is a 606-residue protein sequence, read N- to C-terminus: 1-deoxy-D-xylulose-5-phosphate synthase (606 aa).

Residues H63 and 104-106 contribute to the thiamine diphosphate site; that span reads GHS. Mg(2+) is bound at residue D137. Thiamine diphosphate contacts are provided by residues 138-139, N166, Y273, and E354; that span reads GS. N166 provides a ligand contact to Mg(2+).

Belongs to the transketolase family. DXPS subfamily. As to quaternary structure, homodimer. Mg(2+) serves as cofactor. The cofactor is thiamine diphosphate.

It carries out the reaction D-glyceraldehyde 3-phosphate + pyruvate + H(+) = 1-deoxy-D-xylulose 5-phosphate + CO2. The protein operates within metabolic intermediate biosynthesis; 1-deoxy-D-xylulose 5-phosphate biosynthesis; 1-deoxy-D-xylulose 5-phosphate from D-glyceraldehyde 3-phosphate and pyruvate: step 1/1. Functionally, catalyzes the acyloin condensation reaction between C atoms 2 and 3 of pyruvate and glyceraldehyde 3-phosphate to yield 1-deoxy-D-xylulose-5-phosphate (DXP). The sequence is that of 1-deoxy-D-xylulose-5-phosphate synthase from Sulfurimonas denitrificans (strain ATCC 33889 / DSM 1251) (Thiomicrospira denitrificans (strain ATCC 33889 / DSM 1251)).